Reading from the N-terminus, the 321-residue chain is Lipoyl synthase (321 aa).

7 residues coordinate [4Fe-4S] cluster: Cys-68, Cys-73, Cys-79, Cys-94, Cys-98, Cys-101, and Ser-308. A Radical SAM core domain is found at 80-297 (FNHGTATFMI…RVFAEEIGFT (218 aa)).

The protein belongs to the radical SAM superfamily. Lipoyl synthase family. [4Fe-4S] cluster serves as cofactor.

Its subcellular location is the cytoplasm. It catalyses the reaction [[Fe-S] cluster scaffold protein carrying a second [4Fe-4S](2+) cluster] + N(6)-octanoyl-L-lysyl-[protein] + 2 oxidized [2Fe-2S]-[ferredoxin] + 2 S-adenosyl-L-methionine + 4 H(+) = [[Fe-S] cluster scaffold protein] + N(6)-[(R)-dihydrolipoyl]-L-lysyl-[protein] + 4 Fe(3+) + 2 hydrogen sulfide + 2 5'-deoxyadenosine + 2 L-methionine + 2 reduced [2Fe-2S]-[ferredoxin]. The protein operates within protein modification; protein lipoylation via endogenous pathway; protein N(6)-(lipoyl)lysine from octanoyl-[acyl-carrier-protein]: step 2/2. Catalyzes the radical-mediated insertion of two sulfur atoms into the C-6 and C-8 positions of the octanoyl moiety bound to the lipoyl domains of lipoate-dependent enzymes, thereby converting the octanoylated domains into lipoylated derivatives. This chain is Lipoyl synthase, found in Shewanella woodyi (strain ATCC 51908 / MS32).